A 711-amino-acid chain; its full sequence is Amino-acid racemase (711 aa).

At 1–14 the chain is on the cytoplasmic side; the sequence is MTKNESYSGIDYFR. The chain crosses the membrane as a helical span at residues 15-35; sequence FIAALLIVAIHTSPLFSFSET. Residues 36-37 lie on the Extracellular side of the membrane; sequence GN. A helical membrane pass occupies residues 38-58; that stretch reads FIFTRIVAPVAVPFFFMTSGF. The Cytoplasmic segment spans residues 59-78; sequence FLISRYTCNAEKLGAFIKKT. A helical transmembrane segment spans residues 79 to 99; it reads TLIYGVAILLYIPINVYNGYF. At 100 to 117 the chain is on the extracellular side; that stretch reads KMDNLLPNIIKDIVFDGT. A helical membrane pass occupies residues 118–138; sequence LYHLWYLPASIIGAAIAWYLV. Residues 139–146 lie on the Cytoplasmic side of the membrane; it reads KKVHYRKA. Residues 147–167 traverse the membrane as a helical segment; sequence FLIASILYIIGLFGDSYYGIV. At 168 to 188 the chain is on the extracellular side; sequence KSVSCLNVFYNLIFQLTDYTR. The helical transmembrane segment at 189 to 209 threads the bilayer; it reads NGIFFAPIFFVLGGYISDSPN. Residues 210 to 241 are Cytoplasmic-facing; the sequence is RYRKKNYIRIYSLFCLMFGKTLTLQHFDIQKH. The helical transmembrane segment at 242-262 threads the bilayer; that stretch reads DSMYVLLLPSVWCLFNLLLHF. The Extracellular portion of the chain corresponds to 263 to 306; it reads RGKRRTGLRTISLDQLYHSSVYDCCNTIVCAELLHLQSLLVENS. The chain crosses the membrane as a helical span at residues 307 to 327; it reads LVHYIAVCFASVVLAVVITAL. The Cytoplasmic portion of the chain corresponds to 328-711; sequence LSSLKPKKAK…EHRLNIIRRA (384 aa). Residues 336 to 711 are racemase; sequence AKHTADTDRA…EHRLNIIRRA (376 aa). The Proton acceptor role is filled by lysine 376. An N6-(pyridoxal phosphate)lysine modification is found at lysine 376. Arginine 470 lines the substrate pocket. Catalysis depends on tyrosine 602, which acts as the Proton acceptor. Methionine 651 contacts substrate.

It in the N-terminal section; belongs to the acyltransferase 3 family. In the C-terminal section; belongs to the alanine racemase family. Pyridoxal 5'-phosphate is required as a cofactor.

It localises to the cell membrane. The protein is Amino-acid racemase (vanTG) of Enterococcus faecalis (Streptococcus faecalis).